A 209-amino-acid polypeptide reads, in one-letter code: Translation initiation factor IF-3 (209 aa).

Belongs to the IF-3 family. Monomer.

It is found in the cytoplasm. In terms of biological role, IF-3 binds to the 30S ribosomal subunit and shifts the equilibrium between 70S ribosomes and their 50S and 30S subunits in favor of the free subunits, thus enhancing the availability of 30S subunits on which protein synthesis initiation begins. The polypeptide is Translation initiation factor IF-3 (Chlorobium phaeovibrioides (strain DSM 265 / 1930) (Prosthecochloris vibrioformis (strain DSM 265))).